A 693-amino-acid polypeptide reads, in one-letter code: MA3 DOMAIN-CONTAINING TRANSLATION REGULATORY FACTOR 2 (693 aa).

Residues 25-60 (SLDPLPQANMAEDLTKSRRHSPIKVEGSEETWGVED) form a disordered region. The 122-residue stretch at 90 to 211 (EYKKKATVIV…PPAFLKKQMK (122 aa)) folds into the MI 1 domain. Residues 241–248 (EKRWGGTD) carry the Nuclear localization signal 1 motif. MI domains are found at residues 254-375 (DVKA…SLSA), 389-510 (VFKD…EVLN), and 560-681 (EVKE…EDSQ). Positions 430–437 (VKYLITLA) match the Nuclear localization signal 2 motif. Residues 673-693 (ESFASEDSQSKKQNGSSSSSG) are disordered. A compositionally biased stretch (low complexity) spans 683 to 693 (KKQNGSSSSSG).

Belongs to the PDCD4 family. Binds to EIF4A1. The association with ribosomes is modulated by cellular energy status and TOR activity. As to expression, mostly expressed in reproductive tissues, such as flower buds and flowers, and, to a lower extent, in vegetative tissues, such as leaves, roots and stems.

Its subcellular location is the nucleus. The protein resides in the cytoplasm. It is found in the cytosol. Functionally, involved in target of rapamycin (TOR)-regulated translation control, especially under energy-deficient conditions. The protein is MA3 DOMAIN-CONTAINING TRANSLATION REGULATORY FACTOR 2 of Arabidopsis thaliana (Mouse-ear cress).